Here is a 235-residue protein sequence, read N- to C-terminus: uncharacterized protein (235 aa).

A disordered region spans residues 1–98 (MDTKLSVTGA…NKKNTLHYSK (98 aa)). Residues K16 and K35 each participate in a glycyl lysine isopeptide (Lys-Gly) (interchain with G-Cter in ubiquitin) cross-link. The span at 38-50 (NGNKKRNKNRNRN) shows a compositional bias: basic residues. Residues 51–60 (KKTETKEQNE) show a composition bias toward basic and acidic residues.

This is an uncharacterized protein from Saccharomyces cerevisiae (strain ATCC 204508 / S288c) (Baker's yeast).